The sequence spans 343 residues: Heat-inducible transcription repressor HrcA (343 aa).

This sequence belongs to the HrcA family.

Negative regulator of class I heat shock genes (grpE-dnaK-dnaJ and groELS operons). Prevents heat-shock induction of these operons. This chain is Heat-inducible transcription repressor HrcA, found in Mycolicibacterium paratuberculosis (strain ATCC BAA-968 / K-10) (Mycobacterium paratuberculosis).